The primary structure comprises 286 residues: E3 SUMO-protein ligase K-bZIP (286 aa).

Disordered stretches follow at residues 1–22 and 106–130; these read MPRM…EKDE and WTLS…SKRR.

In terms of assembly, interacts with host HDAC1 and HDAC2, these interactions suppress HDAC activities. Interacts with protein ORF57. Interacts with protein vPK. In terms of processing, sumoylated.

It participates in protein modification; protein sumoylation. In terms of biological role, SUMO E3 ligase that plays a role in viral gene regulation and is essential for viral reactivation. Disrupts host G1 cell cycle control thus allowing viral transcription and translation to proceed at the early stages of infection. Catalyzes its own SUMO modification as well as that of its interacting partners such as host TP53 and RB1. Regulates viral gene expression and reactivation and may mediate the SUMOylation of viral promoters in the low methylated 'Lys-9' histone H3 (H3K9me) region which results in a diminution of viral gene expression after reactivation. SUMOylates also host histone lysine demethylase 4A/KDM4A, an essential step for complete enrichment of SUMO-2/3 on the viral genome during viral transactivation and reactivation. The polypeptide is E3 SUMO-protein ligase K-bZIP (K8) (Human herpesvirus 8 type P (isolate GK18) (HHV-8)).